A 413-amino-acid polypeptide reads, in one-letter code: Gamma-glutamyl phosphate reductase (413 aa).

This sequence belongs to the gamma-glutamyl phosphate reductase family.

The protein resides in the cytoplasm. The catalysed reaction is L-glutamate 5-semialdehyde + phosphate + NADP(+) = L-glutamyl 5-phosphate + NADPH + H(+). Its pathway is amino-acid biosynthesis; L-proline biosynthesis; L-glutamate 5-semialdehyde from L-glutamate: step 2/2. In terms of biological role, catalyzes the NADPH-dependent reduction of L-glutamate 5-phosphate into L-glutamate 5-semialdehyde and phosphate. The product spontaneously undergoes cyclization to form 1-pyrroline-5-carboxylate. In Rhodococcus jostii (strain RHA1), this protein is Gamma-glutamyl phosphate reductase.